The sequence spans 245 residues: tRNA pseudouridine synthase A 2 (245 aa).

Aspartate 53 functions as the Nucleophile in the catalytic mechanism. Tyrosine 111 contributes to the substrate binding site.

The protein belongs to the tRNA pseudouridine synthase TruA family. In terms of assembly, homodimer.

It carries out the reaction uridine(38/39/40) in tRNA = pseudouridine(38/39/40) in tRNA. Formation of pseudouridine at positions 38, 39 and 40 in the anticodon stem and loop of transfer RNAs. In Bacillus thuringiensis subsp. konkukian (strain 97-27), this protein is tRNA pseudouridine synthase A 2.